A 420-amino-acid polypeptide reads, in one-letter code: 3-phosphoshikimate 1-carboxyvinyltransferase (420 aa).

K20, S21, and R25 together coordinate 3-phosphoshikimate. Position 20 (K20) interacts with phosphoenolpyruvate. Residues G90 and R118 each contribute to the phosphoenolpyruvate site. 3-phosphoshikimate contacts are provided by S159, S160, Q161, S187, D303, and K330. Residue Q161 participates in phosphoenolpyruvate binding. Catalysis depends on D303, which acts as the Proton acceptor. Residues R334, R376, and K402 each contribute to the phosphoenolpyruvate site.

This sequence belongs to the EPSP synthase family. Monomer.

It localises to the cytoplasm. The enzyme catalyses 3-phosphoshikimate + phosphoenolpyruvate = 5-O-(1-carboxyvinyl)-3-phosphoshikimate + phosphate. The protein operates within metabolic intermediate biosynthesis; chorismate biosynthesis; chorismate from D-erythrose 4-phosphate and phosphoenolpyruvate: step 6/7. In terms of biological role, catalyzes the transfer of the enolpyruvyl moiety of phosphoenolpyruvate (PEP) to the 5-hydroxyl of shikimate-3-phosphate (S3P) to produce enolpyruvyl shikimate-3-phosphate and inorganic phosphate. The polypeptide is 3-phosphoshikimate 1-carboxyvinyltransferase (Brachyspira hyodysenteriae (strain ATCC 49526 / WA1)).